Here is a 459-residue protein sequence, read N- to C-terminus: Putative flavin-containing monooxygenase 2 (459 aa).

Residues 17–21, E38, and 46–47 contribute to the FAD site; these read GAGVS and VW. Residue 217–220 coordinates NADP(+); sequence SAID.

This sequence belongs to the FMO family. FAD serves as cofactor.

This Arabidopsis thaliana (Mouse-ear cress) protein is Putative flavin-containing monooxygenase 2 (FMO2).